A 421-amino-acid polypeptide reads, in one-letter code: Testin (421 aa).

In terms of domain architecture, PET spans 92-199 (MILTNPVAAK…GDVKLPCEMD (108 aa)). A disordered region spans residues 133-164 (EKQPVAGSEGAQYRKKQLAKQLPAHDQDPSKC). The segment covering 155-164 (PAHDQDPSKC) has biased composition (basic and acidic residues). 3 consecutive LIM zinc-binding domains span residues 234–297 (YSCY…CDSE), 299–359 (PRCA…NHAV), and 362–421 (QGCH…KMMS).

Belongs to the prickle / espinas / testin family. As to quaternary structure, interacts via LIM domain 1 with ZYX. Interacts (via LIM domain 3) with ENAH and VASP. Interacts with ALKBH4, talin, actin, alpha-actinin, GRIP1 and PXN. Interacts (via LIM domain 2) with ACTL7A (via N-terminus). Heterodimer with ACTL7A; the heterodimer interacts with ENAH to form a heterotrimer.

The protein localises to the cytoplasm. It is found in the cell junction. It localises to the focal adhesion. Scaffold protein that may play a role in cell adhesion, cell spreading and in the reorganization of the actin cytoskeleton. Plays a role in the regulation of cell proliferation. May act as a tumor suppressor. The protein is Testin (TES) of Aotus nancymaae (Ma's night monkey).